The sequence spans 61 residues: Small ribosomal subunit protein uS14 (61 aa).

Zn(2+) contacts are provided by C24, C27, C40, and C43.

This sequence belongs to the universal ribosomal protein uS14 family. Zinc-binding uS14 subfamily. Part of the 30S ribosomal subunit. Contacts proteins S3 and S10. Zn(2+) serves as cofactor.

Its function is as follows. Binds 16S rRNA, required for the assembly of 30S particles and may also be responsible for determining the conformation of the 16S rRNA at the A site. This chain is Small ribosomal subunit protein uS14, found in Caldicellulosiruptor bescii (strain ATCC BAA-1888 / DSM 6725 / KCTC 15123 / Z-1320) (Anaerocellum thermophilum).